We begin with the raw amino-acid sequence, 127 residues long: MSAQPNPKAFPLANAQLTNQILDLIQQAQHYKQLKKGANEATKTLNRGICEFIVMTADVEPIEIVLHLPLLCEDKNVPYVFLPSKTALGRACGVSRPVIAASVTTNEARELNAQIQAVKNEIEKLLI.

It belongs to the eukaryotic ribosomal protein eL8 family. Component of the U3 snoRNP particle. Binds to the C'/D and B/C motifs in U3 snoRNA. Component of the 25S U4/U6.U5 tri-snRNP particle, a subcomplex of the spliceosome. Binds to the 5' stem-loop of U4 snRNA.

The protein resides in the nucleus. Its subcellular location is the nucleolus. Functionally, common component of the spliceosome and rRNA processing machinery. In association with the spliceosomal U4/U6.U5 tri-snRNP particle, required for splicing of pre-mRNA. In association with box C/D snoRNPs, required for processing of pre-ribosomal RNA (rRNA) and site-specific 2'-O-methylation of substrate RNAs. Essential for the accumulation and stability of U4 snRNA, U6 snRNA, and box C/D snoRNAs. This is 13 kDa ribonucleoprotein-associated protein (SNU13) from Cryptococcus neoformans var. neoformans serotype D (strain B-3501A) (Filobasidiella neoformans).